A 147-amino-acid chain; its full sequence is Large ribosomal subunit protein uL16 (147 aa).

The protein belongs to the universal ribosomal protein uL16 family. As to quaternary structure, part of the 50S ribosomal subunit.

Functionally, binds 23S rRNA and is also seen to make contacts with the A and possibly P site tRNAs. The polypeptide is Large ribosomal subunit protein uL16 (Lactobacillus delbrueckii subsp. bulgaricus (strain ATCC 11842 / DSM 20081 / BCRC 10696 / JCM 1002 / NBRC 13953 / NCIMB 11778 / NCTC 12712 / WDCM 00102 / Lb 14)).